We begin with the raw amino-acid sequence, 177 residues long: Ribosome maturation factor RimM (177 aa).

A PRC barrel domain is found at 96–177; sequence DNEFYWVDLI…KITVDWGLDY (82 aa).

This sequence belongs to the RimM family. As to quaternary structure, binds ribosomal protein uS19.

It is found in the cytoplasm. An accessory protein needed during the final step in the assembly of 30S ribosomal subunit, possibly for assembly of the head region. Essential for efficient processing of 16S rRNA. May be needed both before and after RbfA during the maturation of 16S rRNA. It has affinity for free ribosomal 30S subunits but not for 70S ribosomes. The polypeptide is Ribosome maturation factor RimM (Herminiimonas arsenicoxydans).